Consider the following 214-residue polypeptide: Adenylate kinase (214 aa).

Residue 10-15 (GAGKGT) participates in ATP binding. The segment at 30 to 59 (STGDMLRAAIKAGSELGNKAKAVMDAGQLV) is NMP. AMP is bound by residues Thr31, Arg36, 57-59 (QLV), 85-88 (GFPR), and Gln92. The LID stretch occupies residues 122-159 (GRRVHSGSGRVYHLVYNPPKVEGKDDVSGDDLSIRPDD). Residues Arg123 and 132-133 (VY) each bind ATP. Positions 156 and 167 each coordinate AMP. Position 200 (Gln200) interacts with ATP.

The protein belongs to the adenylate kinase family. Monomer.

The protein localises to the cytoplasm. It carries out the reaction AMP + ATP = 2 ADP. It functions in the pathway purine metabolism; AMP biosynthesis via salvage pathway; AMP from ADP: step 1/1. In terms of biological role, catalyzes the reversible transfer of the terminal phosphate group between ATP and AMP. Plays an important role in cellular energy homeostasis and in adenine nucleotide metabolism. The protein is Adenylate kinase of Colwellia psychrerythraea (strain 34H / ATCC BAA-681) (Vibrio psychroerythus).